Consider the following 326-residue polypeptide: Cathepsin L-like proteinase (326 aa).

The first 15 residues, M1–G15, serve as a signal peptide directing secretion. Residues S16 to R106 constitute a propeptide, activation peptide. P109 is subject to 3-hydroxyproline; partial. Intrachain disulfides connect C129–C172, C163–C204, and C262–C311. C132 is a catalytic residue. P196 carries the 3-hydroxyproline; partial modification. Catalysis depends on residues H269 and N289.

Belongs to the peptidase C1 family. Monomer. In terms of processing, contains cysteine residues involved in intramolecular disulfide bonding.

The protein localises to the secreted. Its activity is regulated as follows. Strongly inhibited by Antipain, E64 and Leupeptin, and weakly inhibited by iodoacetic acid (IAA) and phenylmethylsulfonyl fluoride (PMSF). Requires the presence of dithiothreitol (DTT) for activity. Functionally, thiol protease. Probably involved in interaction with host tissues. Displays a similar activity to that of papain. Has high activity on Z-Phe-Arg-NHMec, but no activity on Z-Arg-NHMec. The protein is Cathepsin L-like proteinase of Fasciola hepatica (Liver fluke).